A 622-amino-acid chain; its full sequence is Chaperone protein HtpG (622 aa).

The a; substrate-binding stretch occupies residues 1-322 (MTEAKNYEFQ…SEDLPLNISR (322 aa)). Residues 323 to 539 (QSLQDNALVS…DGFMSASMER (217 aa)) form a b region. Residues 540-622 (VLAASRKEQG…KILDRAVSRA (83 aa)) are c.

This sequence belongs to the heat shock protein 90 family. Homodimer.

The protein resides in the cytoplasm. Its function is as follows. Molecular chaperone. Has ATPase activity. In Desulfotalea psychrophila (strain LSv54 / DSM 12343), this protein is Chaperone protein HtpG.